Here is a 435-residue protein sequence, read N- to C-terminus: 5-methylthioadenosine/S-adenosylhomocysteine deaminase (435 aa).

Histidine 65 and histidine 67 together coordinate Zn(2+). Substrate is bound by residues glutamate 94, arginine 150, and histidine 189. Histidine 216 is a Zn(2+) binding site. 2 residues coordinate substrate: glutamate 219 and aspartate 304. Aspartate 304 is a Zn(2+) binding site.

Belongs to the metallo-dependent hydrolases superfamily. MTA/SAH deaminase family. The cofactor is Zn(2+).

The enzyme catalyses S-adenosyl-L-homocysteine + H2O + H(+) = S-inosyl-L-homocysteine + NH4(+). It catalyses the reaction S-methyl-5'-thioadenosine + H2O + H(+) = S-methyl-5'-thioinosine + NH4(+). Its function is as follows. Catalyzes the deamination of 5-methylthioadenosine and S-adenosyl-L-homocysteine into 5-methylthioinosine and S-inosyl-L-homocysteine, respectively. Is also able to deaminate adenosine. In Bacillus anthracis (strain A0248), this protein is 5-methylthioadenosine/S-adenosylhomocysteine deaminase.